The sequence spans 1788 residues: Genome polyprotein (1788 aa).

Residues 1–184 form an interaction with host MAP1LC3A/LC3 region; sequence MMMASKDVVA…LCPLPPIDLR (184 aa). Low complexity predominate over residues 58–68; it reads GRTTPEPTGTA. Positions 58–86 are disordered; the sequence is GRTTPEPTGTAGPPPKQQRDRPPRTQEEV. A compositionally biased stretch (basic and acidic residues) spans 74–84; it reads QQRDRPPRTQE. The segment at 185–399 is interaction with NTPase; sequence NMEPASEPTI…ASLLPDFHLQ (215 aa). Residues 302 to 399 are interaction with NS4; the sequence is HPTQSWSQQT…ASLLPDFHLQ (98 aa). Host ER membrane association regions lie at residues 319–350 and 361–399; these read KLEL…KPLN and TFMG…FHLQ. The interval 400 to 575 is interaction with NS1-2 and NS4 and homooligomerization; sequence GPEDLARDLV…GKTKAAEHLA (176 aa). The 166-residue stretch at 533-698 folds into the SF3 helicase domain; sequence RISMARSALA…EQIRRVSPGD (166 aa). 561–568 serves as a coordination point for ATP; sequence GPPGIGKT. Positions 652 to 757 are important for mitochondrion targeting; it reads AIVITTNAPG…AVALTMERQD (106 aa). The tract at residues 827-833 is functions as endoplasmic reticulum export signal; the sequence is YSLESDG. A host membrane association region spans residues 866 to 911; that stretch reads RAVAYASCIQSAITSILQIAGSALVVNRAVKRMFGTRTATLSLEGP. The tract at residues 948–979 is disordered; the sequence is EEVAHTEIPSATMEGKNKGKNKKGRGRRNNYN. A compositionally biased stretch (basic residues) spans 965–975; the sequence is KGKNKKGRGRR. The interval 988–993 is acidic; that stretch reads DEEYEE. An O-(5'-phospho-RNA)-tyrosine modification is found at tyrosine 991. The segment at 1083–1099 is interaction with host EIF4G; the sequence is WADDEREVDYNEKISFE. A Peptidase C37 domain is found at 1100–1280; it reads APPTLWSRVT…QASEGETTLE (181 aa). Catalysis depends on for 3CLpro activity residues histidine 1129, glutamate 1153, and cysteine 1238. In terms of domain architecture, RdRp catalytic spans 1515–1636; the sequence is KYHFDADYTA…STDIEFDPAK (122 aa). Aspartate 1519, aspartate 1521, aspartate 1623, and glutamate 1624 together coordinate Mg(2+).

Homodimer. Homooligomer. Interacts with NTPase; this interaction increases the proapoptotic activity of the NTPase and is crucial for the formation of the viral replication complex. Interacts with NS4; this interaction is crucial for the formation of the viral replication complex. Interacts (via N-terminus) with host VAPA. Interacts with host MAP1LC3A/LC3; this interaction does not seem to be linked to host autophagy, but rather plays a role in the formation of viral factories. In terms of assembly, homooligomer. Interacts with NS1-2; this interaction increases the proapoptotic activity of the NTPase and is crucial for the formation of the viral replication complex. Interacts with NS4; this interaction increases the proapoptotic activity of the NTPase. As to quaternary structure, homodimer. Monomer; in solution. Interacts with NTPase; this interaction increases the proapoptotic activity of the NTPase. Interacts with NS1-2; this interaction is crucial for the formation of the viral replication complex. In terms of assembly, monomer. Interacts with the RNA-directed RNA polymerase; this interaction induces the multimerization of the RdRp and enhances its activity. Interacts with host IEF4G1; this interaction plays a role in translation of viral proteins. As to quaternary structure, homohexamer; also forms fibrous hexameric oligomer. Interacts with the viral genome-linked protein; this interaction induces the multimerization of the RdRp and enhances its activity. Mg(2+) serves as cofactor. Mn(2+) is required as a cofactor. In terms of processing, specific enzymatic cleavages in vivo yield mature proteins. 3CLpro is first autocatalytically cleaved, then processes the whole polyprotein. NS1/2-3 and NS3-4 sites are cleaved rapidly and NS4-5, NS5-6, and NS6-7 sites are processed subsequently and less efficiently. VPg is uridylylated by the polymerase and is covalently attached to the 5'-end of the polyadenylated genomic and subgenomic RNAs. This uridylylated form acts as a nucleotide-peptide primer for the polymerase.

It is found in the host Golgi apparatus membrane. Its subcellular location is the host endoplasmic reticulum membrane. The catalysed reaction is a ribonucleoside 5'-triphosphate + H2O = a ribonucleoside 5'-diphosphate + phosphate + H(+). It catalyses the reaction Endopeptidase with a preference for cleavage when the P1 position is occupied by Glu-|-Xaa and the P1' position is occupied by Gly-|-Yaa.. It carries out the reaction RNA(n) + a ribonucleoside 5'-triphosphate = RNA(n+1) + diphosphate. In terms of biological role, induces the proliferation of the host smooth ER membranes forming long tubular structures. These remodeled membranes probably form the viral factories that contain the replication complex. May play a role in viral replication by interacting with host VAPA, a vesicle-associated membrane protein that plays a role in SNARE-mediated vesicle fusion. This interaction may target replication complex to intracellular membranes. Displays NTPase activity, but no helicase activity. Induces the formation of convoluted membranes derived from the host ER. These remodeled membranes probably form the viral factories that contain the replication complex. Initiates host cell death by targeting the mitochondrial outer membrane, leading to the permeabilization of mitochondria, programmed host cell death and viral egress. Probably plays a role in preventing the assembly of host stress granules. Its function is as follows. Probable key protein responsible for the formation of membrane alterations by the virus. Induces the formation of convoluted membranes derived from the host ER. These remodeled membranes probably form the viral factories that contain the replication complex. May play a role in targeting replication complex to intracellular membranes. Functionally, viral genome-linked protein is covalently linked to the 5'-end of the positive-strand, negative-strand genomic RNAs and subgenomic RNA. Acts as a genome-linked replication primer. May recruit ribosome to viral RNA thereby promoting viral proteins translation. Interacts with host translation initiation complex to allow the translation of viral proteins. Induces the formation of aggregates of RNA-directed RNA polymerase in the presence of RNA. Through its interaction with the viral RNA-directed RNA polymerase, plays a crucial role in enhancing the polymerase activity. In terms of biological role, processes the polyprotein. 3CLpro-RdRp is first released by autocleavage, then all other proteins are cleaved. May cleave polyadenylate-binding protein thereby inhibiting cellular translation. Replicates genomic and antigenomic RNA by recognizing replications specific signals. Also transcribes a subgenomic mRNA by initiating RNA synthesis internally on antigenomic RNA. This sgRNA codes for structural proteins. Catalyzes the covalent attachment VPg with viral RNAs. The protein is Genome polyprotein of Southampton virus (strain GI/Human/United Kingdom/Southampton/1991) (SHV).